The chain runs to 37 residues: MKVRASVKKICDKCRVIRRNRKIIIICNNAKHKQRQG.

This sequence belongs to the bacterial ribosomal protein bL36 family.

Its subcellular location is the plastid. The protein resides in the chloroplast. The chain is Large ribosomal subunit protein bL36c from Gracilaria tenuistipitata var. liui (Red alga).